The sequence spans 398 residues: Acetyl-CoA acetyltransferase (398 aa).

Residue S2 is modified to N-acetylserine. C91 acts as the Acyl-thioester intermediate in catalysis. The CoA site is built by Y186 and K231. Y186 is a binding site for K(+). K(+) is bound by residues A248, A249, and A251. S252 lines the CoA pocket. Residue V350 coordinates K(+). Catalysis depends on proton acceptor residues H354 and C384.

This sequence belongs to the thiolase-like superfamily. Thiolase family. As to quaternary structure, homotetramer.

The protein resides in the cytoplasm. It catalyses the reaction 2 acetyl-CoA = acetoacetyl-CoA + CoA. Its pathway is metabolic intermediate biosynthesis; (R)-mevalonate biosynthesis; (R)-mevalonate from acetyl-CoA: step 1/3. In terms of biological role, acetyl-CoA acetyltransferase; part of the first module of ergosterol biosynthesis pathway that includes the early steps of the pathway, conserved across all eukaryotes, and which results in the formation of mevalonate from acetyl-coenzyme A (acetyl-CoA). In this module, the acetyl-CoA acetyltransferase ERG10 catalyzes the formation of acetoacetyl-CoA. The hydroxymethylglutaryl-CoA synthase ERG13 then condenses acetyl-CoA with acetoacetyl-CoA to form HMG-CoA. The rate-limiting step of the early module is the reduction to mevalonate by the 3-hydroxy-3-methylglutaryl-coenzyme A (HMG-CoA) reductases HMG1 and HMG2 which are derived from a single ancestral HMGR gene by gene duplication. The chain is Acetyl-CoA acetyltransferase from Saccharomyces pastorianus (strain ATCC 76670 / Carlsberg bottom yeast no.2 / CBS 1503 / CLIB 180 / NBRC 10610 / NRRL Y-1525) (Saaz-type lager yeast).